We begin with the raw amino-acid sequence, 359 residues long: Phospho-N-acetylmuramoyl-pentapeptide-transferase (359 aa).

The next 10 membrane-spanning stretches (helical) occupy residues 26 to 46 (TIYG…WVIN), 73 to 93 (TMGG…WADL), 98 to 118 (ILIT…DDYL), 134 to 154 (FLVQ…CPDF), 166 to 186 (FTPD…VGTS), 197 to 217 (GLAI…AYVA), 234 to 254 (CGEI…FLWF), 261 to 281 (VFMG…IAVI), 286 to 306 (ILLL…IIQV), and 338 to 358 (IVRF…TLKI).

It belongs to the glycosyltransferase 4 family. MraY subfamily. Requires Mg(2+) as cofactor.

The protein localises to the cell inner membrane. It carries out the reaction UDP-N-acetyl-alpha-D-muramoyl-L-alanyl-gamma-D-glutamyl-meso-2,6-diaminopimeloyl-D-alanyl-D-alanine + di-trans,octa-cis-undecaprenyl phosphate = di-trans,octa-cis-undecaprenyl diphospho-N-acetyl-alpha-D-muramoyl-L-alanyl-D-glutamyl-meso-2,6-diaminopimeloyl-D-alanyl-D-alanine + UMP. It functions in the pathway cell wall biogenesis; peptidoglycan biosynthesis. Its function is as follows. Catalyzes the initial step of the lipid cycle reactions in the biosynthesis of the cell wall peptidoglycan: transfers peptidoglycan precursor phospho-MurNAc-pentapeptide from UDP-MurNAc-pentapeptide onto the lipid carrier undecaprenyl phosphate, yielding undecaprenyl-pyrophosphoryl-MurNAc-pentapeptide, known as lipid I. The chain is Phospho-N-acetylmuramoyl-pentapeptide-transferase from Desulforapulum autotrophicum (strain ATCC 43914 / DSM 3382 / VKM B-1955 / HRM2) (Desulfobacterium autotrophicum).